Consider the following 853-residue polypeptide: E3 ubiquitin-protein ligase ZNRF3 (853 aa).

The first 28 residues, M1 to A28, serve as a signal peptide directing secretion. Over K29 to M192 the chain is Extracellular. Residues G193–I213 form a helical membrane-spanning segment. The Cytoplasmic portion of the chain corresponds to K214–D853. The segment at C266–R307 adopts an RING-type; atypical zinc-finger fold. 4 disordered regions span residues S583–S629, S650–E673, G685–Y713, and T834–D853. The segment covering T589–R607 has biased composition (gly residues). The segment covering H615 to S629 has biased composition (polar residues).

Belongs to the ZNRF3 family.

The protein localises to the cell membrane. It carries out the reaction S-ubiquitinyl-[E2 ubiquitin-conjugating enzyme]-L-cysteine + [acceptor protein]-L-lysine = [E2 ubiquitin-conjugating enzyme]-L-cysteine + N(6)-ubiquitinyl-[acceptor protein]-L-lysine.. Its pathway is protein modification; protein ubiquitination. Its function is as follows. E3 ubiquitin-protein ligase that acts as a negative regulator of the Wnt signaling pathway by mediating the ubiquitination and subsequent degradation of Wnt receptor complex components. Along with RSPO2 and RNF43, constitutes a master switch that governs limb specification. This chain is E3 ubiquitin-protein ligase ZNRF3 (znrf3), found in Xenopus tropicalis (Western clawed frog).